We begin with the raw amino-acid sequence, 500 residues long: NAD(P)H-quinone oxidoreductase chain 4, chloroplastic (500 aa).

14 helical membrane-spanning segments follow: residues 4–24 (FYWL…IALL), 37–57 (ICIC…HFQL), 80–100 (LGID…TTLA), 113–130 (LFHF…GLFS), 134–154 (LLLF…LLSM), 167–187 (FILY…GMGL), 208–228 (ALEI…SPII), 242–262 (HYST…YGLV), 272–292 (AHSI…IYAA), 305–325 (IAYS…SITD), 330–350 (GAIL…FLAG), 386–406 (LALP…GIIT), 416–436 (ILIT…SLSM), and 462–482 (IFIL…PDFV).

The protein belongs to the complex I subunit 4 family.

It is found in the plastid. It localises to the chloroplast thylakoid membrane. It catalyses the reaction a plastoquinone + NADH + (n+1) H(+)(in) = a plastoquinol + NAD(+) + n H(+)(out). The catalysed reaction is a plastoquinone + NADPH + (n+1) H(+)(in) = a plastoquinol + NADP(+) + n H(+)(out). The polypeptide is NAD(P)H-quinone oxidoreductase chain 4, chloroplastic (Nuphar advena (Common spatterdock)).